The primary structure comprises 216 residues: MKIGLFGGSFNPVHLTHLDVANGVLKRLGLDKVLFVPAGNPYHKEQGEMLSAELRYELVKKAVQGCSGLGVSDIDISADGPTYTVDTLREASRRYPDAELYFIMGQDSLETFTTWKGWQSIPELANVVAVSRAEADHGAMSQELKRIFPEVVESGQDVWQMKGGKSIYIIGDFDFVISSTLVREEWKKGRDVSKLVPKAVAECMNEKGDKLKKFWR.

The protein belongs to the NadD family.

It carries out the reaction nicotinate beta-D-ribonucleotide + ATP + H(+) = deamido-NAD(+) + diphosphate. Its pathway is cofactor biosynthesis; NAD(+) biosynthesis; deamido-NAD(+) from nicotinate D-ribonucleotide: step 1/1. Its function is as follows. Catalyzes the reversible adenylation of nicotinate mononucleotide (NaMN) to nicotinic acid adenine dinucleotide (NaAD). This Maridesulfovibrio salexigens (strain ATCC 14822 / DSM 2638 / NCIMB 8403 / VKM B-1763) (Desulfovibrio salexigens) protein is Probable nicotinate-nucleotide adenylyltransferase.